The primary structure comprises 179 residues: Signal peptidase complex subunit 3 (179 aa).

At 1-12 the chain is on the cytoplasmic side; it reads MHTVLTRGNATV. A helical; Signal-anchor for type II membrane protein membrane pass occupies residues 13 to 33; sequence AYTLSVLACLTFSCFLSTVFL. Residues 34-179 are Lumenal-facing; sequence DYRTDANINT…FPADYATSSI (146 aa). N-linked (GlcNAc...) asparagine glycosylation is found at Asn-73 and Asn-141.

It belongs to the SPCS3 family. As to quaternary structure, component of the signal peptidase complex (SPC) composed of a catalytic subunit twr/SEC11 and three accessory subunits Spase12/SPCS1, Spase25/SPCS2 and Spase22-23/SPCS3. The complex induces a local thinning of the ER membrane which is used to measure the length of the signal peptide (SP) h-region of protein substrates. This ensures the selectivity of the complex towards h-regions shorter than 18-20 amino acids.

It is found in the endoplasmic reticulum membrane. Functionally, essential component of the signal peptidase complex (SPC) which catalyzes the cleavage of N-terminal signal sequences from nascent proteins as they are translocated into the lumen of the endoplasmic reticulum. Essential for the SPC catalytic activity, possibly by stabilizing and positioning the active center of the complex close to the lumenal surface. In terms of biological role, (Microbial infection) Plays an important role in infection by flaviviruses such as West Nile virus and Dengue virus type 2. This chain is Signal peptidase complex subunit 3 (Spase22-23), found in Drosophila melanogaster (Fruit fly).